The sequence spans 410 residues: 45 kDa immediate-early protein 2 (410 aa).

The segment at 36 to 166 (SEEEQGEEVE…SKRISELDNE (131 aa)) is disordered. Composition is skewed to low complexity over residues 47-67 (RGAT…TSPT), 90-101 (SSSSSSCSSASD), and 132-147 (AASS…SSGG). Residues 257-283 (VRCRLGTMCNLALSTPFLMEHTMPVTH) fold into a zinc finger.

Its function is as follows. Activates the E1.7 promoter. This activation is augmented by the IE1 protein. It down-regulates the transcription of genes under the control of the major IE promoter. This chain is 45 kDa immediate-early protein 2 (UL122), found in Homo sapiens (Human).